Reading from the N-terminus, the 158-residue chain is MSYTITDPSKLAYLSSAWADPNSLINLCTNSLGNQFQTQQARTTVQQQFADVWQPVPTLTSRFPAGAGYFRVYRYDPILDPLITFLMGTFDTRNRIIEVENPQNPTTTETLDATRRVDDATVAIRSAINNLLNELVRGTGMYNQVSFETISGLTWTSS.

Ser2 bears the N-acetylserine; by host mark.

This sequence belongs to the virgaviridae capsid protein family.

It is found in the virion. Capsid protein self-assembles to form rod-shaped virions about 18 nm in diameter with a central canal enclosing the viral genomic RNA. The polypeptide is Capsid protein (CP) (Odontoglossum ringspot virus (isolate Japan) (ORSV)).